Consider the following 118-residue polypeptide: Large ribosomal subunit protein uL18 (118 aa).

It belongs to the universal ribosomal protein uL18 family. Part of the 50S ribosomal subunit; part of the 5S rRNA/L5/L18/L25 subcomplex. Contacts the 5S and 23S rRNAs.

Its function is as follows. This is one of the proteins that bind and probably mediate the attachment of the 5S RNA into the large ribosomal subunit, where it forms part of the central protuberance. The protein is Large ribosomal subunit protein uL18 of Wolinella succinogenes (strain ATCC 29543 / DSM 1740 / CCUG 13145 / JCM 31913 / LMG 7466 / NCTC 11488 / FDC 602W) (Vibrio succinogenes).